Here is a 139-residue protein sequence, read N- to C-terminus: MHSRLPVPASLCLLLLLPSVLPASMPGGLSPRDVTDPEVQEAAVFAVEEYNARSTNSNYFKALRLVQAESQVVSGAKYYLTMELVKTSCRKTNGNPKGYQEIQNCRLPPRNQQEKLTCHFEVWSRPWLNKTLLTKVTCN.

A signal peptide spans 1–22; it reads MHSRLPVPASLCLLLLLPSVLP. Residues 27-127 enclose the Cystatin domain; the sequence is GGLSPRDVTD…CHFEVWSRPW (101 aa). Residues 71-75 carry the Secondary area of contact motif; it reads QVVSG. Cystine bridges form between C89/C105 and C118/C138.

This sequence belongs to the cystatin family. In terms of tissue distribution, expressed by the venom gland.

The protein resides in the secreted. Its function is as follows. Inhibits various C1 cysteine proteases including cathepsin L, papain and cathepsin B. This protein has no toxic activity and its function in the venom is unknown. It may play a role as housekeeping or regulatory protein. The chain is Cystatin-1 from Crotalus adamanteus (Eastern diamondback rattlesnake).